A 181-amino-acid polypeptide reads, in one-letter code: Crossover junction endodeoxyribonuclease RuvC (181 aa).

Residues D8, E67, and D139 contribute to the active site. Mg(2+) contacts are provided by D8, E67, and D139.

This sequence belongs to the RuvC family. In terms of assembly, homodimer which binds Holliday junction (HJ) DNA. The HJ becomes 2-fold symmetrical on binding to RuvC with unstacked arms; it has a different conformation from HJ DNA in complex with RuvA. In the full resolvosome a probable DNA-RuvA(4)-RuvB(12)-RuvC(2) complex forms which resolves the HJ. Mg(2+) serves as cofactor.

The protein resides in the cytoplasm. It catalyses the reaction Endonucleolytic cleavage at a junction such as a reciprocal single-stranded crossover between two homologous DNA duplexes (Holliday junction).. Functionally, the RuvA-RuvB-RuvC complex processes Holliday junction (HJ) DNA during genetic recombination and DNA repair. Endonuclease that resolves HJ intermediates. Cleaves cruciform DNA by making single-stranded nicks across the HJ at symmetrical positions within the homologous arms, yielding a 5'-phosphate and a 3'-hydroxyl group; requires a central core of homology in the junction. The consensus cleavage sequence is 5'-(A/T)TT(C/G)-3'. Cleavage occurs on the 3'-side of the TT dinucleotide at the point of strand exchange. HJ branch migration catalyzed by RuvA-RuvB allows RuvC to scan DNA until it finds its consensus sequence, where it cleaves and resolves the cruciform DNA. The chain is Crossover junction endodeoxyribonuclease RuvC from Acinetobacter baylyi (strain ATCC 33305 / BD413 / ADP1).